Consider the following 335-residue polypeptide: Glucan endo-1,3-beta-glucosidase, acidic isoform (335 aa).

A signal peptide spans 1-29 (MARQGVIASMHALALLLGAFAAIPTGVQS). Residue Glu122 is the Proton donor of the active site. Glu259 acts as the Nucleophile in catalysis.

The protein belongs to the glycosyl hydrolase 17 family. Accumulates in aleurone layers. Much lower levels are found in the embryo, and none in starchy endosperm.

Its subcellular location is the secreted. The protein localises to the extracellular space. The enzyme catalyses Hydrolysis of (1-&gt;3)-beta-D-glucosidic linkages in (1-&gt;3)-beta-D-glucans.. Its function is as follows. Is thought to be an important plant defense-related product against fungal pathogens. In Zea mays (Maize), this protein is Glucan endo-1,3-beta-glucosidase, acidic isoform.